The chain runs to 249 residues: Isoprenyl transferase (249 aa).

Residue Asp-29 is part of the active site. Asp-29 contributes to the Mg(2+) binding site. Residues 30-33 (GNGR), Trp-34, Arg-42, His-46, and 74-76 (STE) contribute to the substrate site. Asn-77 acts as the Proton acceptor in catalysis. Substrate-binding positions include Trp-78, Arg-80, Arg-197, and 203-205 (RLS). Glu-216 contributes to the Mg(2+) binding site.

Belongs to the UPP synthase family. As to quaternary structure, homodimer. It depends on Mg(2+) as a cofactor.

Catalyzes the condensation of isopentenyl diphosphate (IPP) with allylic pyrophosphates generating different type of terpenoids. This Trichormus variabilis (strain ATCC 29413 / PCC 7937) (Anabaena variabilis) protein is Isoprenyl transferase.